The chain runs to 295 residues: GTPase Era (295 aa).

The Era-type G domain maps to 3 to 170; that stretch reads KSGFVTIVGR…VDLMKTELPE (168 aa). The interval 11-18 is G1; the sequence is GRPNVGKS. Residue 11 to 18 coordinates GTP; it reads GRPNVGKS. The tract at residues 37-41 is G2; it reads QTTRN. The tract at residues 58 to 61 is G3; that stretch reads DTPG. Residues 58-62 and 120-123 each bind GTP; these read DTPGI and NKID. The G4 stretch occupies residues 120–123; sequence NKID. Positions 149–151 are G5; sequence IAA. The region spanning 201-278 is the KH type-2 domain; that stretch reads LRDEVPHGIA…NVKIWVKVRK (78 aa).

Belongs to the TRAFAC class TrmE-Era-EngA-EngB-Septin-like GTPase superfamily. Era GTPase family. Monomer.

It localises to the cytoplasm. The protein resides in the cell membrane. Its function is as follows. An essential GTPase that binds both GDP and GTP, with rapid nucleotide exchange. Plays a role in 16S rRNA processing and 30S ribosomal subunit biogenesis and possibly also in cell cycle regulation and energy metabolism. This is GTPase Era from Clostridium botulinum (strain Eklund 17B / Type B).